The chain runs to 80 residues: Serine rich endogenous peptide 18 (80 aa).

Residues 1 to 25 (MYNVVVCLLTLSFLLLTGLSNTAEA) form the signal peptide. Positions 45-59 (KAEVGGSCSPHAHGR) match the SCOOP motif motif. The disordered stretch occupies residues 50–80 (GSCSPHAHGRGPPNRPGSSNIPGSPKRCTKP). A SxS motif essential for MIK2 binding motif is present at residues 51 to 53 (SCS).

It belongs to the serine rich endogenous peptide (SCOOP) phytocytokine family. Interacts with MIK2 (via extracellular leucine-rich repeat domain); this interaction triggers the formation of complex between MIK2 and the BAK1/SERK3 and SERK4 coreceptors, and subsequent BAK1 activation by phosphorylation.

The protein localises to the cell membrane. The protein resides in the secreted. Its subcellular location is the extracellular space. It is found in the apoplast. Brassicaceae-specific phytocytokine (plant endogenous peptide released into the apoplast) perceived by MIK2 in a BAK1/SERK3 and SERK4 coreceptors-dependent manner, that modulates various physiological and antimicrobial processes including growth prevention and reactive oxygen species (ROS) response regulation. This Arabidopsis thaliana (Mouse-ear cress) protein is Serine rich endogenous peptide 18.